The chain runs to 194 residues: uncharacterized protein (194 aa).

The 166-residue stretch at Arg-20 to Ile-185 folds into the Exonuclease domain.

This is an uncharacterized protein from Escherichia coli (Bacteriophage 186).